The primary structure comprises 258 residues: Protease HtpX homolog (258 aa).

2 consecutive transmembrane segments (helical) span residues 24-44 and 45-65; these read VLLF…LGLG and GPLF…LISP. Zn(2+) is bound at residue His146. Glu147 is an active-site residue. His150 lines the Zn(2+) pocket. 2 helical membrane passes run 157-177 and 186-206; these read IVMT…WSTV and LVGI…LFIS. Glu210 provides a ligand contact to Zn(2+).

Belongs to the peptidase M48B family. Requires Zn(2+) as cofactor.

It is found in the cell membrane. This is Protease HtpX homolog from Methanothermobacter thermautotrophicus (strain ATCC 29096 / DSM 1053 / JCM 10044 / NBRC 100330 / Delta H) (Methanobacterium thermoautotrophicum).